The primary structure comprises 273 residues: MSDVEIMAGIMRDRILNLLKEGKRIDGRSFEEYRDIEIKTGFIEKAEGSAWVRLGGTRVLVGIKVDVGEPFPDLPDRGVMTTNVELVPLASPTFEPGPPDERAIELARVIDRGIRESQAVELEKLVIVPGKLVRVVFIDVHVLDHDGNLFDATGLAAMAALMTTKIPKVEYNEETGEIIKLDEYEPLPVKHVPIPVTFAKIGSSIIVDPNLDEETVMDSRLTITTDETGHISAVQKGEGGSFKLEEVMYAIDTALKKADELRKILLEAVGSAS.

This sequence belongs to the RNase PH family. Rrp42 subfamily. As to quaternary structure, component of the archaeal exosome complex. Forms a hexameric ring-like arrangement composed of 3 Rrp41-Rrp42 heterodimers. The hexameric ring associates with a trimer of Rrp4 and/or Csl4 subunits.

The protein localises to the cytoplasm. Non-catalytic component of the exosome, which is a complex involved in RNA degradation. Contributes to the structuring of the Rrp41 active site. This Thermococcus gammatolerans (strain DSM 15229 / JCM 11827 / EJ3) protein is Exosome complex component Rrp42.